We begin with the raw amino-acid sequence, 231 residues long: Claudin-10 (231 aa).

The chain crosses the membrane as a helical span at residues methionine 1–valine 21. The Extracellular portion of the chain corresponds to serine 22–arginine 80. The helical transmembrane segment at glycine 81–methionine 101 threads the bilayer. At lysine 102–lysine 115 the chain is on the cytoplasmic side. A helical membrane pass occupies residues isoleucine 116–serine 136. Residues leucine 137 to alanine 160 are Extracellular-facing. The helical transmembrane segment at alanine 161–phenylalanine 181 threads the bilayer. Topologically, residues serine 182 to valine 231 are cytoplasmic.

It belongs to the claudin family. As to quaternary structure, can form homodimers both in trans (interaction between CLDN10 molecules in opposing membranes) and in cis (interaction between CLDN10 molecules within one membrane). Interacts with CLDN19.

The protein localises to the cell junction. The protein resides in the tight junction. It is found in the cell membrane. It carries out the reaction Na(+)(in) = Na(+)(out). The enzyme catalyses Li(+)(in) = Li(+)(out). The catalysed reaction is K(+)(in) = K(+)(out). It catalyses the reaction Rb(+)(in) = Rb(+)(out). It carries out the reaction Cs(+)(in) = Cs(+)(out). The enzyme catalyses NH4(+)(in) = NH4(+)(out). The catalysed reaction is methylamine(out) = methylamine(in). It catalyses the reaction Mg(2+)(in) = Mg(2+)(out). It carries out the reaction Ca(2+)(in) = Ca(2+)(out). The enzyme catalyses Sr(2+)(in) = Sr(2+)(out). The catalysed reaction is chloride(in) = chloride(out). It catalyses the reaction nitrate(in) = nitrate(out). Its function is as follows. Forms paracellular channels: polymerizes in tight junction strands with cation- and anion-selective channels through the strands, conveying epithelial permeability in a process known as paracellular tight junction permeability. In sweat glands and in the thick ascending limb (TAL) of Henle's loop in kidney, it controls paracellular sodium permeability which is essential for proper sweat production and renal function. In renal proximal tubules, it conveys selective chloride over hydrogencarbonate anion permeability which is required for renal chloride reabsorption and salt homeostasis. This chain is Claudin-10 (CLDN10), found in Bos taurus (Bovine).